A 611-amino-acid chain; its full sequence is DNA mismatch repair protein MutL (611 aa).

It belongs to the DNA mismatch repair MutL/HexB family.

This protein is involved in the repair of mismatches in DNA. It is required for dam-dependent methyl-directed DNA mismatch repair. May act as a 'molecular matchmaker', a protein that promotes the formation of a stable complex between two or more DNA-binding proteins in an ATP-dependent manner without itself being part of a final effector complex. In Borreliella afzelii (strain PKo) (Borrelia afzelii), this protein is DNA mismatch repair protein MutL.